The sequence spans 148 residues: Ubiquitin-conjugating enzyme E2-17 kDa (148 aa).

Residues 1 to 147 form the UBC core domain; it reads MASKRILKEL…ARSWTQKYAM (147 aa). The active-site Glycyl thioester intermediate is cysteine 85.

Belongs to the ubiquitin-conjugating enzyme family.

The enzyme catalyses S-ubiquitinyl-[E1 ubiquitin-activating enzyme]-L-cysteine + [E2 ubiquitin-conjugating enzyme]-L-cysteine = [E1 ubiquitin-activating enzyme]-L-cysteine + S-ubiquitinyl-[E2 ubiquitin-conjugating enzyme]-L-cysteine.. It participates in protein modification; protein ubiquitination. In terms of biological role, catalyzes the covalent attachment of ubiquitin to other proteins. Mediates the selective degradation of short-lived and abnormal proteins. The chain is Ubiquitin-conjugating enzyme E2-17 kDa from Solanum lycopersicum (Tomato).